A 370-amino-acid polypeptide reads, in one-letter code: L-selectin (370 aa).

Positions 1-28 are cleaved as a signal peptide; the sequence is MLCPWKCQNAQRGLWNVFKLWVWIMLCC. The propeptide occupies 29–38; that stretch reads DFFAHHGTDC. Residues 39 to 333 lie on the Extracellular side of the membrane; the sequence is WTYHYSKRPM…SINEESDYNP (295 aa). The C-type lectin domain occupies 55 to 155; it reads AFCRENYTDL…ACHKAKTALC (101 aa). 10 disulfide bridges follow: Cys57–Cys155, Cys128–Cys147, Cys128–Cys160, Cys160–Cys171, Cys165–Cys180, Cys182–Cys191, Cys197–Cys241, Cys227–Cys254, Cys259–Cys303, and Cys289–Cys316. 3 N-linked (GlcNAc...) asparagine glycosylation sites follow: Asn60, Asn77, and Asn104. 5 residues coordinate Ca(2+): Glu118, Asn120, Glu126, Asn143, and Asp144. The region spanning 156–192 is the EGF-like domain; it reads YTASCKPWSCSGHGQCVEVINNYTCNCDLGYYGPECQ. Asn177 is a glycosylation site (N-linked (GlcNAc...) asparagine). Sushi domains lie at 195-256 and 257-318; these read TQCV…TCRV and IQCE…RCQK. N-linked (GlcNAc...) asparagine glycosylation is found at Asn216, Asn226, and Asn246. Residues Asn308 and Asn320 are each glycosylated (N-linked (GlcNAc...) asparagine). The chain crosses the membrane as a helical span at residues 334–354; that stretch reads LFIPVAVMVTAFSGLAFIIWL. At 355–370 the chain is on the cytoplasmic side; it reads ARRLKRKSKKVSEKHG.

Belongs to the selectin/LECAM family. In terms of assembly, interaction with SELPLG/PSGL1 and PODXL2 is required for promoting recruitment and rolling of leukocytes. This interaction is dependent on the sialyl Lewis X glycan modification of SELPLG and PODXL2, and tyrosine sulfation modifications of SELPLG. Sulfation on 'Tyr-51' of SELPLG is important for L-selectin binding. In terms of processing, N-glycosylated. Highly expressed in lymphocytes from peripheral lymph nodes. Low in lymphocytes isolated from Peyer patches.

Its subcellular location is the cell membrane. In terms of biological role, calcium-dependent lectin that mediates cell adhesion by binding to glycoproteins on neighboring cells. Mediates the adherence of lymphocytes to endothelial cells of high endothelial venules in peripheral lymph nodes. Promotes initial tethering and rolling of leukocytes in endothelia. The polypeptide is L-selectin (SELL) (Bos taurus (Bovine)).